The following is a 427-amino-acid chain: MALRCINNLEIFLRRCTAPTLHRCCVASSRTAHTASSSKGSGGDNSKDKENNGQNKSGYRSFGWRSAFQFCVPFSLGALVSAVLIERHRDELTPTISARSLKGRRNEFNFIADVVAGCGDSVVYIEIKDTRHFDYFSGQPITASNGSGFVIEQNGLILTNAHVVINKPHTMVQVRLSDGRTFPATIEDVDQTSDLATLRIQVSGLPVMKLGKSSTLRSGEWVVALGSPLALSNTVTAGVISATQRASQELGLRNRDINYLQTDAAITFGNSGGPLVNLDGEAIGVNSMKVTAGISFAIPIDYVKVFLERAAERRKKGSAHKTGYPVKRYMGITMLTLTPDILFELKSRSQNMPNNLMHGVLVWKVIVGSPAHSGGLQPGDIVTHINKKEIKNSSDVYDALAEGRKDLEIVILRGVKQMHVKITPEDP.

The segment at 33 to 55 (HTASSSKGSGGDNSKDKENNGQN) is disordered. The chain crosses the membrane as a helical span at residues 66 to 86 (SAFQFCVPFSLGALVSAVLIE). Positions 78 to 81 (ALVS) match the IAP-binding motif. Positions 144–307 (SNGSGFVIEQ…IPIDYVKVFL (164 aa)) are serine protease. Active-site charge relay system residues include histidine 162, aspartate 194, and serine 271. The PDZ domain maps to 330–415 (MGITMLTLTP…DLEIVILRGV (86 aa)).

It belongs to the peptidase S1C family. In terms of assembly, interacts with th/DIAP1 (via BIR 2 domain).

It is found in the mitochondrion intermembrane space. The protein resides in the mitochondrion membrane. The enzyme catalyses Cleavage of non-polar aliphatic amino-acids at the P1 position, with a preference for Val, Ile and Met. At the P2 and P3 positions, Arg is selected most strongly with a secondary preference for other hydrophilic residues.. Functionally, serine protease that shows proteolytic activity against a non-specific substrate beta-casein. Promotes or induces cell death either by direct binding to and inhibition of BIRC proteins (also called inhibitor of apoptosis proteins, IAPs), leading to an increase in caspase activity, or by a BIRC inhibition-independent, caspase-independent and serine protease activity-dependent mechanism. Can antagonize antiapoptotic activity of th/Diap1 by directly inducing the degradation of th/Diap1. This is Serine protease HTRA2, mitochondrial from Drosophila pseudoobscura pseudoobscura (Fruit fly).